Here is a 528-residue protein sequence, read N- to C-terminus: Protein spinster homolog 1 (528 aa).

Residues 1–38 (MAGSDTAPFLSQADDPDDGPAPGHPGLPGPMGNPKSGE) form a disordered region. Ala2 bears the N-acetylalanine mark. The next 12 membrane-spanning stretches (helical) occupy residues 60 to 80 (LIVVVLCYINLLNYMDRFTVA), 98 to 118 (GLIQTVFISSYMVLAPVFGYL), 126 to 146 (YLMCGGIAFWSLVTLGSSFIP), 160 to 180 (VGVGEASYSTIAPTLIADLFV), 187 to 207 (MLSIFYFAIPVGSGLGYIAGS), 218 to 238 (WALRVTPGLGVLAVLLLFLVV), 278 to 298 (LGFTAVAFVTGSLALWAPAFL), 323 to 343 (LIFGLITCLTGVLGVGLGVEI), 357 to 377 (LVCAAGLLGSSPFLFLSLACA), 381 to 401 (IVATYIFIFIGETLLSMNWAI), 421 to 441 (FQIVLSHLLGDAGSPYLIGLI), and 465 to 485 (MLCAFVGALGGAAFLGTAMFI). Ser518 is subject to Phosphoserine.

It belongs to the major facilitator superfamily. Spinster (TC 2.A.1.49) family. Interacts with BCL2 and BCL2L1.

The protein resides in the lysosome membrane. The enzyme catalyses a 1-acyl-sn-glycero-3-phosphocholine(out) + H(+)(out) = a 1-acyl-sn-glycero-3-phosphocholine(in) + H(+)(in). It carries out the reaction 1-hexadecanoyl-sn-glycero-3-phosphocholine(out) + H(+)(out) = 1-hexadecanoyl-sn-glycero-3-phosphocholine(in) + H(+)(in). The catalysed reaction is 1-(9Z-octadecenoyl)-sn-glycero-3-phosphocholine(out) + H(+)(out) = 1-(9Z-octadecenoyl)-sn-glycero-3-phosphocholine(in) + H(+)(in). It catalyses the reaction 1-(5Z,8Z,11Z,14Z-eicosatetraenoyl)-sn-glycero-3-phosphocholine(out) + H(+)(out) = 1-(5Z,8Z,11Z,14Z-eicosatetraenoyl)-sn-glycero-3-phosphocholine(in) + H(+)(in). The enzyme catalyses 1-(4Z,7Z,10Z,13Z,16Z,19Z-docosahexaenoyl)-sn-glycero-3-phosphocholine(out) + H(+)(out) = 1-(4Z,7Z,10Z,13Z,16Z,19Z-docosahexaenoyl)-sn-glycero-3-phosphocholine(in) + H(+)(in). It carries out the reaction a 1-acyl-sn-glycero-3-phosphoethanolamine(out) + H(+)(out) = a 1-acyl-sn-glycero-3-phosphoethanolamine(in) + H(+)(in). The catalysed reaction is 1-(9Z-octadecenoyl)-sn-glycero-3-phosphoethanolamine(out) + H(+)(out) = 1-(9Z-octadecenoyl)-sn-glycero-3-phosphoethanolamine(in) + H(+)(in). It catalyses the reaction 1-acyl-sn-glycero-3-phospho-(1'-sn-glycerol)(out) + H(+)(out) = 1-acyl-sn-glycero-3-phospho-(1'-sn-glycerol)(in) + H(+)(in). The enzyme catalyses 1-(9Z-octadecenoyl)-sn-glycero-3-phospho-(1'-sn-glycerol)(out) + H(+)(out) = 1-(9Z-octadecenoyl)-sn-glycero-3-phospho-(1'-sn-glycerol)(in) + H(+)(in). It carries out the reaction a 1-O-(1Z-alkenyl)-sn-glycero-3-phosphocholine(out) + H(+)(out) = a 1-O-(1Z-alkenyl)-sn-glycero-3-phosphocholine(in) + H(+)(in). The catalysed reaction is 1-(1Z-hexadecenyl)-sn-glycero-3-phosphocholine(out) + H(+)(out) = 1-(1Z-hexadecenyl)-sn-glycero-3-phosphocholine(in) + H(+)(in). It catalyses the reaction a 1-O-(1Z-alkenyl)-sn-glycero-3-phosphoethanolamine(out) + H(+)(out) = a 1-O-(1Z-alkenyl)-sn-glycero-3-phosphoethanolamine(in) + H(+)(in). The enzyme catalyses 1-O-(1Z-hexadecenyl)-sn-glycero-3-phosphoethanolamine(out) + H(+)(out) = 1-O-(1Z-hexadecenyl)-sn-glycero-3-phosphoethanolamine(in) + H(+)(in). Functionally, plays a critical role in the phospholipid salvage pathway from lysosomes to the cytosol. Mediates the rate-limiting, proton-dependent, lysosomal efflux of lysophospholipids, which can then be reacylated by acyltransferases in the endoplasmic reticulum to form phospholipids. Selective for zwitterionic headgroups such as lysophosphatidylcholine (LPC) and lysophosphatidylethanolamine (LPE), can also transport lysophosphatidylglycerol (LPG), but not other anionic lysophospholipids, sphingosine, nor sphingomyelin. Transports lysophospholipids with saturated, monounsaturated, and polyunsaturated fatty acids, such as 1-hexadecanoyl-sn-glycero-3-phosphocholine, 1-(9Z-octadecenoyl)-sn-glycero-3-phosphocholine and 1-(4Z,7Z,10Z,13Z,16Z,19Z-docosahexaenoyl)-sn-glycero-3-phosphocholine, respectively. Can also transport lysoplasmalogen (LPC with a fatty alcohol) such as 1-(1Z-hexadecenyl)-sn-glycero-3-phosphocholine. Essential player in lysosomal homeostasis. Crucial for cell survival under conditions of nutrient limitation. May be involved in necrotic or autophagic cell death. In Rattus norvegicus (Rat), this protein is Protein spinster homolog 1 (Spns1).